Reading from the N-terminus, the 182-residue chain is Ribosome maturation factor RimM (182 aa).

The PRC barrel domain maps to 102–182; that stretch reads EEDDYYWKDL…RVEVDWDPGF (81 aa).

The protein belongs to the RimM family. In terms of assembly, binds ribosomal protein uS19.

The protein localises to the cytoplasm. Its function is as follows. An accessory protein needed during the final step in the assembly of 30S ribosomal subunit, possibly for assembly of the head region. Essential for efficient processing of 16S rRNA. May be needed both before and after RbfA during the maturation of 16S rRNA. It has affinity for free ribosomal 30S subunits but not for 70S ribosomes. This chain is Ribosome maturation factor RimM, found in Yersinia pseudotuberculosis serotype IB (strain PB1/+).